A 451-amino-acid polypeptide reads, in one-letter code: MDYKTKKNSNATVDIKLTFEASDIEKAFDKTYEEKQKNVKIPGFRPGKAPLNMVKRHLGDSVASDAINTLIVDGMTSILSKLEHPMIRFPKFEIQDYQPGKNLIATAIYETNPEITLGKYKKIKIKLPEVSVSDLDVSEEVEKVRKNLARKQLKEEGQAAVAGDIIDMEYTVCEKGQESKNSGNTSNDYHLGHENNLKGFDENLYGMKSGEKKDFVHTFPEDYSQNEVAGKTFEYSVTIKALYANILPAVDDDLASEFDGSESLNVLKDKIRKNLKEGFEDRVKNKKLDEIYKEIIDDSKYVFPESYLREESEHVFHNMIHEFKLPHMTMEKYANMVQKDLKEVQESFQKLAETRLKHYFTRQKIAEIENISYSEQDFDADLEKLASSYQISLSDLKKELEKGKLMEQYRENFFAKKIDNILFDLVEKKYTDKLNIGQIKDYLNQKEEVKA.

A PPIase FKBP-type domain is found at 163-248 (GDIIDMEYTV…IKALYANILP (86 aa)).

It belongs to the FKBP-type PPIase family. Tig subfamily.

Its subcellular location is the cytoplasm. The catalysed reaction is [protein]-peptidylproline (omega=180) = [protein]-peptidylproline (omega=0). Functionally, involved in protein export. Acts as a chaperone by maintaining the newly synthesized protein in an open conformation. Functions as a peptidyl-prolyl cis-trans isomerase. The protein is Trigger factor of Leptospira interrogans serogroup Icterohaemorrhagiae serovar copenhageni (strain Fiocruz L1-130).